The sequence spans 386 residues: Bifunctional enzyme IspD/IspF (386 aa).

The 2-C-methyl-D-erythritol 4-phosphate cytidylyltransferase stretch occupies residues 1–225; that stretch reads MYNFVTLSIL…SCLSAPSSDT (225 aa). Residues 226-386 form a 2-C-methyl-D-erythritol 2,4-cyclodiphosphate synthase region; the sequence is LSGVGFDVHA…NLKYFDWTKI (161 aa). Positions 232 and 234 each coordinate a divalent metal cation. 4-CDP-2-C-methyl-D-erythritol 2-phosphate is bound by residues 232–234 and 258–259; these read DVH and HS. A divalent metal cation is bound at residue His-266. 4-CDP-2-C-methyl-D-erythritol 2-phosphate-binding positions include 280 to 282, 285 to 289, 356 to 359, Phe-363, and Arg-366; these read DIG, FPDND, and TTTE.

It in the N-terminal section; belongs to the IspD/TarI cytidylyltransferase family. IspD subfamily. In the C-terminal section; belongs to the IspF family. The cofactor is a divalent metal cation.

It carries out the reaction 2-C-methyl-D-erythritol 4-phosphate + CTP + H(+) = 4-CDP-2-C-methyl-D-erythritol + diphosphate. The catalysed reaction is 4-CDP-2-C-methyl-D-erythritol 2-phosphate = 2-C-methyl-D-erythritol 2,4-cyclic diphosphate + CMP. It functions in the pathway isoprenoid biosynthesis; isopentenyl diphosphate biosynthesis via DXP pathway; isopentenyl diphosphate from 1-deoxy-D-xylulose 5-phosphate: step 2/6. It participates in isoprenoid biosynthesis; isopentenyl diphosphate biosynthesis via DXP pathway; isopentenyl diphosphate from 1-deoxy-D-xylulose 5-phosphate: step 4/6. Its function is as follows. Bifunctional enzyme that catalyzes the formation of 4-diphosphocytidyl-2-C-methyl-D-erythritol from CTP and 2-C-methyl-D-erythritol 4-phosphate (MEP) (IspD), and catalyzes the conversion of 4-diphosphocytidyl-2-C-methyl-D-erythritol 2-phosphate (CDP-ME2P) to 2-C-methyl-D-erythritol 2,4-cyclodiphosphate (ME-CPP) with a corresponding release of cytidine 5-monophosphate (CMP) (IspF). The protein is Bifunctional enzyme IspD/IspF of Sulfurimonas denitrificans (strain ATCC 33889 / DSM 1251) (Thiomicrospira denitrificans (strain ATCC 33889 / DSM 1251)).